Consider the following 426-residue polypeptide: MSGGVYGGDEVGALVFDIGSFSVRAGYAGEDCPKADFPTTVGLLAAEEGGGLELEGDKEKKGKIFHIDTNALHVPRDGAEVMSPLKNGMIEDWECFRAILDHTYSKHVKSEPNLHPVLMSEAPWNTRAKREKLTELMFEQYNIPAFFLCKTAVLTAFANGRSTGLVLDSGATHTTAIPVHDGYVLQQGIVKSPLAGDFISMQCRELFQEMAIDIIPPYMIAAKEPVREGAPPNWKKKEKLPQVSKSWHNYMCNEVIQDFQASVLQVSDSPYDEQVAAQMPTVHYEMPNGYNTDYGAERLRIPEGLFDPSNVKGLSGNTMLGVGHVVTTSIGMCDIDIRPGLYGSVIVTGGNTLLQGFTDRLNRELSQKTPPSMRLKLIASNSTMERKFSPWIGGSILASLGTFQQMWISKQEYEEGGKQCVERKCP.

Residues 39–82 (TTVGLLAAEEGGGLELEGDKEKKGKIFHIDTNALHVPRDGAEVM) are essential for mediating its function in dendritic development; may contribute to neuronal-specific targeting.

Belongs to the actin family. In terms of assembly, component of the multiprotein chromatin-remodeling complexes SWI/SNF: SWI/SNF-A (BAF), SWI/SNF-B (PBAF) and related complexes. The canonical complex contains a catalytic subunit (either SMARCA4/BRG1/BAF190A or SMARCA2/BRM/BAF190B) and at least SMARCE1, ACTL6A/BAF53, SMARCC1/BAF155, SMARCC2/BAF170 and SMARCB1/SNF5/BAF47. Other subunits specific to each of the complexes may also be present permitting several possible combinations developmentally and tissue specific. Component of the BAF complex, which includes at least actin (ACTB), ARID1A/BAF250A, ARID1B/BAF250B, SMARCA2/BRM, SMARCA4/BRG1/BAF190A, ACTL6A/BAF53, ACTL6B/BAF53B, SMARCE1/BAF57, SMARCC1/BAF155, SMARCC2/BAF170, SMARCB1/SNF5/INI1 and one or more SMARCD1/BAF60A, SMARCD2/BAF60B, or SMARCD3/BAF60C. Component of neuron-specific chromatin remodeling complex (nBAF complex) composed of at least, ARID1A/BAF250A or ARID1B/BAF250B, SMARCD1/BAF60A or SMARCD2/BAF60B or SMARCD3/BAF60C, SMARCA2/BRM/BAF190B, SMARCA4/BRG1/BAF190A, SMARCB1/BAF47, SMARCC1/BAF155, SMARCE1/BAF57, SMARCC2/BAF170, DPF1/BAF45B, DPF3/BAF45C, ACTL6B/BAF53B and actin (ACTB). Note that the nBAF complex is polymorphic in regard to the ATPase, SMARCA2 and SMARCA4 occupying mutually exclusive positions. May be a component of the SWI/SNF-B (PBAF) chromatin remodeling complex, at least composed of SMARCA4/BRG1, SMARCB1/BAF47/SNF5, ACTL6A/BAF53A or ACTL6B/BAF53B, SMARCE1/BAF57, SMARCD1/BAF60A, SMARCD2/BAF60B, perhaps SMARCD3/BAF60C, SMARCC1/BAF155, SMARCC2/BAF170, PBRM1/BAF180, ARID2/BAF200 and actin.

The protein resides in the nucleus. Functionally, involved in transcriptional activation and repression of select genes by chromatin remodeling (alteration of DNA-nucleosome topology). Component of SWI/SNF chromatin remodeling complexes that carry out key enzymatic activities, changing chromatin structure by altering DNA-histone contacts within a nucleosome in an ATP-dependent manner. Belongs to the neuron-specific chromatin remodeling complex (nBAF complex), as such plays a role in remodeling mononucleosomes in an ATP-dependent fashion, and is required for postmitotic neural development and dendritic outgrowth. During neural development a switch from a stem/progenitor to a postmitotic chromatin remodeling mechanism occurs as neurons exit the cell cycle and become committed to their adult state. The transition from proliferating neural stem/progenitor cells to postmitotic neurons requires a switch in subunit composition of the npBAF and nBAF complexes. As neural progenitors exit mitosis and differentiate into neurons, npBAF complexes which contain ACTL6A/BAF53A and PHF10/BAF45A, are exchanged for homologous alternative ACTL6B/BAF53B and DPF1/BAF45B or DPF3/BAF45C subunits in neuron-specific complexes (nBAF). The npBAF complex is essential for the self-renewal/proliferative capacity of the multipotent neural stem cells. The nBAF complex along with CREST plays a role regulating the activity of genes essential for dendrite growth. ACTL6B/BAF53B is not essential for assembly of the nBAF complex but is required for targeting the complex and CREST to the promoter of genes essential for dendritic growth. Essential for neuronal maturation and dendrite development. The sequence is that of Actin-like protein 6B from Homo sapiens (Human).